Reading from the N-terminus, the 834-residue chain is MSNVPKEKRFIVWLDEVTKDDVVLVGGKNANLGEMIRAGIPVPPGFAVTAYAYKYFIEKTGLKDKIYPLLNSIDVNDKKVLDETTAKIRQWIMDTPMPPEVEEEIRKYYRELAKKIGMEPEKLRVAVRSSATAEDMPEASFAGQQDTYLNVYGEDNVVYYVKRCWASLFTSRAVFYRVAQGIPHEKSLMSVTVQKMVNSRTAGVMFTLHPVTGDEKVVVIEASWGLGESVVGGKVTPDEWVVDKQTLQIVDQKIHHKTLAIVFDPKKGKNVEIRWDENKQAWVSEEGPVDIEMVKHFHPDKPALKEEEVKRLAELALLIEKHYGRHMDIEWAVDYDIPFPDNVFIVQARLETVWSVRKEKEKAEKKAEIKGKNIVKLSEAKVLVRGLPASPGIGAGVAKVIFDPHSKEAQEFKEGEVLVTKMTDPDWVPLMKKAVAIVTDEGGMTSHAAIVSRELGIPAIVGTGNATQVIKSGIEVTVDGSRGVVYEGIVEDLVKPKEEVKAEVAGVGISPEQLLPLYPVTATKIYMNLGEPDAIEKYKDLPFDGIGLMRIEFIITDWVQYHPLYLIEQGKESLFIDKLAEGIAKVAQAIYPRPVVVRFSDFKTNEYRGLKGGEKYEPEERNPMIGWRGVSRYIHPKYEPAFRLEVRAIKKVREEMGLTNVWVMFPFVRTTWELERALKIMEEEGLKRGKDFKVWAMAEVPSIVLLADKFAEYVDGFSIGSNDLTQLILGADRDSNILAEMGYFDERDPAVLAGIKMIIEKAHSKGATVSICGQAPSVYPEIVEFLVEAGIDSISVNPDAVIATRRLVASIERKIMLKRLNKIMDKLNKLELGF.

Residue H447 is the Tele-phosphohistidine intermediate of the active site. Substrate is bound by residues R550, R598, E699, G720, S721, N722, and D723. E699 contacts Mg(2+). Position 723 (D723) interacts with Mg(2+). The active-site Proton donor is the C772.

This sequence belongs to the PEP-utilizing enzyme family. In terms of assembly, homooligomer. Forms a large complex of about 2000 kDa. Requires Mg(2+) as cofactor. The N-terminus is blocked.

The enzyme catalyses pyruvate + ATP + H2O = phosphoenolpyruvate + AMP + phosphate + 2 H(+). Its pathway is carbohydrate biosynthesis; gluconeogenesis. Catalyzes the phosphorylation of pyruvate to phosphoenolpyruvate. The protein is Probable phosphoenolpyruvate synthase (ppsA) of Staphylothermus marinus (strain ATCC 43588 / DSM 3639 / JCM 9404 / F1).